We begin with the raw amino-acid sequence, 393 residues long: S-adenosylmethionine synthase (393 aa).

H17 provides a ligand contact to ATP. D19 contacts Mg(2+). Position 45 (E45) interacts with K(+). L-methionine-binding residues include E58 and Q106. The tract at residues 106–116 (QSAHIAQGVDA) is flexible loop. ATP-binding positions include 171–173 (DAK), D246, 252–253 (RK), A269, and K273. D246 is an L-methionine binding site. K277 is a binding site for L-methionine.

This sequence belongs to the AdoMet synthase family. As to quaternary structure, homotetramer; dimer of dimers. It depends on Mg(2+) as a cofactor. The cofactor is K(+).

The protein localises to the cytoplasm. The catalysed reaction is L-methionine + ATP + H2O = S-adenosyl-L-methionine + phosphate + diphosphate. It participates in amino-acid biosynthesis; S-adenosyl-L-methionine biosynthesis; S-adenosyl-L-methionine from L-methionine: step 1/1. Functionally, catalyzes the formation of S-adenosylmethionine (AdoMet) from methionine and ATP. The overall synthetic reaction is composed of two sequential steps, AdoMet formation and the subsequent tripolyphosphate hydrolysis which occurs prior to release of AdoMet from the enzyme. The protein is S-adenosylmethionine synthase of Roseobacter denitrificans (strain ATCC 33942 / OCh 114) (Erythrobacter sp. (strain OCh 114)).